The chain runs to 152 residues: Ribonuclease pancreatic gamma-type (152 aa).

Residues 1-25 (MGLEKSFILFSLLVLVLGCVQPSLV) form the signal peptide. The interval 26 to 48 (GESKESPSEKFKRRHMDEEGPYQ) is disordered. The span at 27–43 (ESKESPSEKFKRRHMDE) shows a compositional bias: basic and acidic residues. Residues lysine 35 and arginine 38 each coordinate substrate. Histidine 40 serves as the catalytic Proton acceptor. Intrachain disulfides connect cysteine 54-cysteine 112, cysteine 68-cysteine 123, cysteine 86-cysteine 138, and cysteine 93-cysteine 100. Substrate-binding positions include 69 to 73 (KPLNT) and lysine 94. Histidine 147 (proton donor) is an active-site residue.

It belongs to the pancreatic ribonuclease family. Monomer.

The protein resides in the secreted. It catalyses the reaction an [RNA] containing cytidine + H2O = an [RNA]-3'-cytidine-3'-phosphate + a 5'-hydroxy-ribonucleotide-3'-[RNA].. The catalysed reaction is an [RNA] containing uridine + H2O = an [RNA]-3'-uridine-3'-phosphate + a 5'-hydroxy-ribonucleotide-3'-[RNA].. Endonuclease that catalyzes the cleavage of RNA on the 3' side of pyrimidine nucleotides. Acts on single-stranded and double-stranded RNA. This Rattus fuscipes (Bush rat) protein is Ribonuclease pancreatic gamma-type.